The sequence spans 485 residues: NADH-quinone oxidoreductase subunit N (485 aa).

The next 14 helical transmembrane spans lie at 8–28 (LIAL…MLSI), 35–55 (FLNA…LWFV), 75–95 (LYTG…YPWL), 105–125 (FYLL…ANHL), 127–147 (ALFL…GYAF), 159–179 (YTIL…LVYA), 203–223 (LLAG…LVPF), 235–255 (PAPV…GVVM), 271–291 (VVLG…ALSQ), 297–317 (LLGY…IALQ), 326–346 (VGVY…VVSL), 374–394 (AVMT…GFIG), 408–430 (WWLV…RVAV), and 455–475 (IVVL…QPLI).

This sequence belongs to the complex I subunit 2 family. In terms of assembly, NDH-1 is composed of 13 different subunits. Subunits NuoA, H, J, K, L, M, N constitute the membrane sector of the complex.

The protein resides in the cell inner membrane. It carries out the reaction a quinone + NADH + 5 H(+)(in) = a quinol + NAD(+) + 4 H(+)(out). In terms of biological role, NDH-1 shuttles electrons from NADH, via FMN and iron-sulfur (Fe-S) centers, to quinones in the respiratory chain. The immediate electron acceptor for the enzyme in this species is believed to be ubiquinone. Couples the redox reaction to proton translocation (for every two electrons transferred, four hydrogen ions are translocated across the cytoplasmic membrane), and thus conserves the redox energy in a proton gradient. The protein is NADH-quinone oxidoreductase subunit N of Klebsiella pneumoniae subsp. pneumoniae (strain ATCC 700721 / MGH 78578).